The sequence spans 1173 residues: Protein GIGANTEA (1173 aa).

Disordered stretches follow at residues 150-187 (EQQN…RKPL), 604-641 (SGSK…NVKG), and 840-863 (SRTE…SGRP). Polar residues-rich tracts occupy residues 162 to 172 (SKATTSGSPTS) and 613 to 633 (YAST…QTAN). Over residues 854–863 (RHSDEGSGRP) the composition is skewed to basic and acidic residues.

Belongs to the GIGANTEA family. Interacts with SPY. Interacts with ADO1 (via N-terminus) and ADO2. Interacts with ADO3 (via N-terminus). Interacts (via N-terminus) with CDF1. Interacts (via N-terminus) with TCP4. As to expression, widely expressed with highest levels in inflorescence apices, young flowers and young siliques.

It localises to the nucleus. It is found in the cytoplasm. Involved in regulation of circadian rhythm and photoperiodic flowering. May play a role in maintenance of circadian amplitude and period length. Is involved in phytochrome B signaling. Stabilizes ADO3 and the circadian photoreceptor ADO1/ZTL. Regulates 'CONSTANS' (CO) in the long-day flowering pathway by modulating the ADO3-dependent protein stability of CDF1 and CDF2, but is not essential to activate CO transcription. Regulates, via the microRNA miR172, a CO-independent pathway that promotes photoperiodic flowering by inducing 'FLOWERING LOCUS T'. The sequence is that of Protein GIGANTEA (GI) from Arabidopsis thaliana (Mouse-ear cress).